A 125-amino-acid chain; its full sequence is Glycine cleavage system H protein 1 (125 aa).

The 82-residue stretch at 22–103 (KAYIGITDYA…PYGSWLVAVR (82 aa)) folds into the Lipoyl-binding domain. Lys-63 carries the N6-lipoyllysine modification.

This sequence belongs to the GcvH family. The glycine cleavage system is composed of four proteins: P, T, L and H. The cofactor is (R)-lipoate.

Its function is as follows. The glycine cleavage system catalyzes the degradation of glycine. The H protein shuttles the methylamine group of glycine from the P protein to the T protein. The polypeptide is Glycine cleavage system H protein 1 (Caldanaerobacter subterraneus subsp. tengcongensis (strain DSM 15242 / JCM 11007 / NBRC 100824 / MB4) (Thermoanaerobacter tengcongensis)).